A 437-amino-acid polypeptide reads, in one-letter code: C-terminal-binding protein 2 (437 aa).

Residues S103, 183–188 (IGLGRI), D207, 240–246 (CNLNEHN), 267–269 (TAR), and D293 each bind NAD(+). R269 is an active-site residue. E298 is an active-site residue. The Proton donor role is filled by H318. 318–321 (HTAW) is a binding site for NAD(+). The disordered stretch occupies residues 410-437 (PLIPSVSHTPSPGQTTKPDPDREIPTDQ). Positions 415 to 426 (VSHTPSPGQTTK) are enriched in polar residues. Basic and acidic residues predominate over residues 427–437 (PDPDREIPTDQ).

This sequence belongs to the D-isomer specific 2-hydroxyacid dehydrogenase family. As to quaternary structure, interacts with the C-terminus of tcf7l1-a via the consensus motifs P-X-[DNS]-L-[STVA].

It localises to the nucleus. Corepressor targeting diverse transcription regulators. This Xenopus laevis (African clawed frog) protein is C-terminal-binding protein 2 (ctbp2).